The chain runs to 563 residues: Dihydroxy-acid dehydratase (563 aa).

Residue aspartate 79 coordinates Mg(2+). Cysteine 120 lines the [2Fe-2S] cluster pocket. Mg(2+) is bound by residues aspartate 121 and lysine 122. Lysine 122 carries the N6-carboxylysine modification. Position 193 (cysteine 193) interacts with [2Fe-2S] cluster. Glutamate 451 is a Mg(2+) binding site. Serine 477 acts as the Proton acceptor in catalysis.

Belongs to the IlvD/Edd family. Homodimer. It depends on [2Fe-2S] cluster as a cofactor. Mg(2+) is required as a cofactor.

It carries out the reaction (2R)-2,3-dihydroxy-3-methylbutanoate = 3-methyl-2-oxobutanoate + H2O. It catalyses the reaction (2R,3R)-2,3-dihydroxy-3-methylpentanoate = (S)-3-methyl-2-oxopentanoate + H2O. It participates in amino-acid biosynthesis; L-isoleucine biosynthesis; L-isoleucine from 2-oxobutanoate: step 3/4. The protein operates within amino-acid biosynthesis; L-valine biosynthesis; L-valine from pyruvate: step 3/4. Functionally, functions in the biosynthesis of branched-chain amino acids. Catalyzes the dehydration of (2R,3R)-2,3-dihydroxy-3-methylpentanoate (2,3-dihydroxy-3-methylvalerate) into 2-oxo-3-methylpentanoate (2-oxo-3-methylvalerate) and of (2R)-2,3-dihydroxy-3-methylbutanoate (2,3-dihydroxyisovalerate) into 2-oxo-3-methylbutanoate (2-oxoisovalerate), the penultimate precursor to L-isoleucine and L-valine, respectively. This Sulfurovum sp. (strain NBC37-1) protein is Dihydroxy-acid dehydratase.